Consider the following 429-residue polypeptide: MDKIRIVGGNELKGTIPISGAKNAALPLMIASLLTEEKLILENVPRLADVALLQRILGNHGVDITTNGKRNGDDPYAGQTLEIDARVIVDTTAPYDLVSRMRASFWVLGPLLARIGVAKVSLPGGCAIGTRPVDFHLDALRALGAEIEIDAGYVVAKAPQGLKGARIVFPKVSVGATHTALMAATLARGDSIIENAAREPEVVDLADCLIKMGARITGAGSSTIHVEGVARLKAARHAVLPDRIETGTYAMATAMTGGDVMLAGARPDLLESALDALRQAGAEIDATNEGIRVRRNGAGILPVDVTTAPYPGFPTDLQAQFMALMTKAKGNCRITETIFENRFMHVQELARLGARIHLDGDTAVVEGVERLTGAPVMATDLRASVSLVIAGLAAEGETMVQRVYHLDRGFEKLEEKLSRCGAQIERISG.

A phosphoenolpyruvate-binding site is contributed by 22–23 (KN). UDP-N-acetyl-alpha-D-glucosamine is bound at residue arginine 102. Cysteine 126 serves as the catalytic Proton donor. Residue cysteine 126 is modified to 2-(S-cysteinyl)pyruvic acid O-phosphothioketal. Residues 171-174 (KVSV), aspartate 316, and isoleucine 338 contribute to the UDP-N-acetyl-alpha-D-glucosamine site.

This sequence belongs to the EPSP synthase family. MurA subfamily.

Its subcellular location is the cytoplasm. It catalyses the reaction phosphoenolpyruvate + UDP-N-acetyl-alpha-D-glucosamine = UDP-N-acetyl-3-O-(1-carboxyvinyl)-alpha-D-glucosamine + phosphate. It participates in cell wall biogenesis; peptidoglycan biosynthesis. Functionally, cell wall formation. Adds enolpyruvyl to UDP-N-acetylglucosamine. This Xanthobacter autotrophicus (strain ATCC BAA-1158 / Py2) protein is UDP-N-acetylglucosamine 1-carboxyvinyltransferase.